The sequence spans 428 residues: Adenylosuccinate synthetase (428 aa).

GTP is bound by residues 12–18 and 40–42; these read GDEGKGK and GHT. Residue Asp-13 is the Proton acceptor of the active site. The Mg(2+) site is built by Asp-13 and Gly-40. IMP-binding positions include 13–16, 38–41, Thr-128, Arg-142, Gln-223, Thr-238, and Arg-302; these read DEGK and NAGH. His-41 (proton donor) is an active-site residue. 298-304 serves as a coordination point for substrate; the sequence is VTTGRPR. Residues Arg-304, 330–332, and 412–414 contribute to the GTP site; these read KLD and GTG.

It belongs to the adenylosuccinate synthetase family. Homodimer. Mg(2+) serves as cofactor.

The protein resides in the cytoplasm. The catalysed reaction is IMP + L-aspartate + GTP = N(6)-(1,2-dicarboxyethyl)-AMP + GDP + phosphate + 2 H(+). The protein operates within purine metabolism; AMP biosynthesis via de novo pathway; AMP from IMP: step 1/2. Functionally, plays an important role in the de novo pathway of purine nucleotide biosynthesis. Catalyzes the first committed step in the biosynthesis of AMP from IMP. This Bifidobacterium adolescentis (strain ATCC 15703 / DSM 20083 / NCTC 11814 / E194a) protein is Adenylosuccinate synthetase.